The chain runs to 456 residues: Glycosyl hydrolase family 109 protein 2 (456 aa).

The tat-type signal signal peptide spans 1–33; the sequence is MSGFDRRSFLKASMVTAAATALAACASSERATG. NAD(+)-binding positions include 63-64, Asp85, 134-137, 154-155, and Asn183; these read ER, WAWH, and EV. Residues Tyr212, Arg231, 243 to 246, and Tyr325 each bind substrate; that span reads YPTH. Position 243 (Tyr243) interacts with NAD(+).

It belongs to the Gfo/Idh/MocA family. Glycosyl hydrolase 109 subfamily. NAD(+) is required as a cofactor. Post-translationally, predicted to be exported by the Tat system. The position of the signal peptide cleavage has not been experimentally proven.

Glycosidase. The protein is Glycosyl hydrolase family 109 protein 2 of Shewanella sp. (strain ANA-3).